The chain runs to 202 residues: Endothelin-1 (202 aa).

The N-terminal stretch at 1–25 (MDYFPVIFSLLFVTFQGAPETAVLG) is a signal peptide. The propeptide occupies 26 to 50 (AELSTGAENGVQSPPPSTPWRPRRS). 2 cysteine pairs are disulfide-bonded: cysteine 53/cysteine 67 and cysteine 55/cysteine 63. Residues 74–202 (VNTPERVVPY…DQKLTHNRAH (129 aa)) constitute a propeptide that is removed on maturation. The interval 110-124 (CQCAHQKDKKCWNFC) is endothelin-like.

The protein belongs to the endothelin/sarafotoxin family. Highest expression in the adult is in lung. Lower levels found in heart, kidney, brain and intestine. In the embryo, expressed in outer and inner pharyngeal arch surfaces. Also expressed in endothelium of dorsal aorta and arch arteries, and in epithelium of pharyngeal pouches.

It is found in the secreted. Its function is as follows. Endothelins are endothelium-derived vasoconstrictor peptides. Probable ligand for G-protein coupled receptors EDNRA and EDNRB which activates PTK2B, BCAR1, BCAR3 and, GTPases RAP1 and RHOA cascade in glomerular mesangial cells. Also binds the DEAR/FBXW7-AS1 receptor. Promotes mesenteric arterial wall remodeling via activation of ROCK signaling and subsequent colocalization of NFATC3 with F-actin filaments. NFATC3 then translocates to the nucleus where it subsequently promotes the transcription of the smooth muscle hypertrophy and differentiation marker ACTA2. The chain is Endothelin-1 (Edn1) from Mus musculus (Mouse).